Here is a 312-residue protein sequence, read N- to C-terminus: Large ribosomal subunit protein uL10 (312 aa).

The interval 287 to 312 is disordered; the sequence is AAAAPAAKKEEPKEESDDDMGFGLFD.

Belongs to the universal ribosomal protein uL10 family. As to quaternary structure, P0 forms a pentameric complex by interaction with dimers of P1 and P2. Post-translationally, phosphorylated.

Functionally, ribosomal protein P0 is the functional equivalent of E.coli protein L10. The sequence is that of Large ribosomal subunit protein uL10 from Caenorhabditis elegans.